Reading from the N-terminus, the 353-residue chain is Holliday junction branch migration complex subunit RuvB (353 aa).

A large ATPase domain (RuvB-L) region spans residues 4-190; that stretch reads HYIRFKIMTN…FGIPMRLNFY (187 aa). ATP is bound by residues isoleucine 29, arginine 30, glycine 71, lysine 74, threonine 75, threonine 76, 137-139, arginine 180, tyrosine 190, and arginine 227; that span reads EDF. Residue threonine 75 coordinates Mg(2+). The interval 191-261 is small ATPAse domain (RuvB-S); it reads NTEELKKVLN…ISDFGLNRLE (71 aa). A head domain (RuvB-H) region spans residues 264–353; the sequence is RIGLDSNDYR…HQFNIFNEHE (90 aa). Residues arginine 300, arginine 319, and arginine 324 each contribute to the DNA site.

Belongs to the RuvB family. Homohexamer. Forms an RuvA(8)-RuvB(12)-Holliday junction (HJ) complex. HJ DNA is sandwiched between 2 RuvA tetramers; dsDNA enters through RuvA and exits via RuvB. An RuvB hexamer assembles on each DNA strand where it exits the tetramer. Each RuvB hexamer is contacted by two RuvA subunits (via domain III) on 2 adjacent RuvB subunits; this complex drives branch migration. In the full resolvosome a probable DNA-RuvA(4)-RuvB(12)-RuvC(2) complex forms which resolves the HJ.

The protein localises to the cytoplasm. The catalysed reaction is ATP + H2O = ADP + phosphate + H(+). In terms of biological role, the RuvA-RuvB-RuvC complex processes Holliday junction (HJ) DNA during genetic recombination and DNA repair, while the RuvA-RuvB complex plays an important role in the rescue of blocked DNA replication forks via replication fork reversal (RFR). RuvA specifically binds to HJ cruciform DNA, conferring on it an open structure. The RuvB hexamer acts as an ATP-dependent pump, pulling dsDNA into and through the RuvAB complex. RuvB forms 2 homohexamers on either side of HJ DNA bound by 1 or 2 RuvA tetramers; 4 subunits per hexamer contact DNA at a time. Coordinated motions by a converter formed by DNA-disengaged RuvB subunits stimulates ATP hydrolysis and nucleotide exchange. Immobilization of the converter enables RuvB to convert the ATP-contained energy into a lever motion, pulling 2 nucleotides of DNA out of the RuvA tetramer per ATP hydrolyzed, thus driving DNA branch migration. The RuvB motors rotate together with the DNA substrate, which together with the progressing nucleotide cycle form the mechanistic basis for DNA recombination by continuous HJ branch migration. Branch migration allows RuvC to scan DNA until it finds its consensus sequence, where it cleaves and resolves cruciform DNA. The protein is Holliday junction branch migration complex subunit RuvB of Rickettsia massiliae (strain Mtu5).